Here is a 275-residue protein sequence, read N- to C-terminus: Trypsin-4 (275 aa).

Positions 1–18 (MSNKITILLAVLLAVVAC) are cleaved as a signal peptide. Residues 19 to 48 (AQAHASHQRRVPYPLPRFLPRPHHTVSNHR) constitute a propeptide, activation peptide. Positions 49-274 (IVGGFEIDVA…VRDWIRETCG (226 aa)) constitute a Peptidase S1 domain. The cysteines at positions 74 and 90 are disulfide-linked. Catalysis depends on charge relay system residues H89 and D134. 2 disulfides stabilise this stretch: C199–C215 and C226–C250. S230 functions as the Charge relay system in the catalytic mechanism.

Belongs to the peptidase S1 family. In terms of tissue distribution, expressed in the midgut. Expression levels drop a few hours after blood feeding and pick up again 28 hours later.

The protein resides in the secreted. The enzyme catalyses Preferential cleavage: Arg-|-Xaa, Lys-|-Xaa.. In terms of biological role, constitutive trypsin that is expressed 2 days after emergence, coinciding with host seeking behavior of the female. The protein is Trypsin-4 (TRYP4) of Anopheles gambiae (African malaria mosquito).